Reading from the N-terminus, the 377-residue chain is UPF0754 membrane protein lin2327 (377 aa).

2 helical membrane passes run 1–21 (MSVL…GAMT) and 357–377 (YLGG…AMWI).

It belongs to the UPF0754 family.

The protein resides in the cell membrane. The sequence is that of UPF0754 membrane protein lin2327 from Listeria innocua serovar 6a (strain ATCC BAA-680 / CLIP 11262).